The following is a 142-amino-acid chain: Neuritin (142 aa).

A signal peptide spans M1–A27. The GPI-anchor amidated glycine moiety is linked to residue G116. Residues A117 to F142 constitute a propeptide, removed in mature form.

Belongs to the neuritin family. As to quaternary structure, component of the outer core of AMPAR complex. AMPAR complex consists of an inner core made of 4 pore-forming GluA/GRIA proteins (GRIA1, GRIA2, GRIA3 and GRIA4) and 4 major auxiliary subunits arranged in a twofold symmetry. One of the two pairs of distinct binding sites is occupied either by CNIH2, CNIH3 or CACNG2, CACNG3. The other harbors CACNG2, CACNG3, CACNG4, CACNG8 or GSG1L. This inner core of AMPAR complex is complemented by outer core constituents binding directly to the GluA/GRIA proteins at sites distinct from the interaction sites of the inner core constituents. Outer core constituents include at least PRRT1, PRRT2, CKAMP44/SHISA9, FRRS1L and NRN1. The proteins of the inner and outer core serve as a platform for other, more peripherally associated AMPAR constituents. Alone or in combination, these auxiliary subunits control the gating and pharmacology of the AMPAR complex and profoundly impact their biogenesis and protein processing.

It is found in the cell membrane. It localises to the synapse. Promotes neurite outgrowth and especially branching of neuritic processes in primary hippocampal and cortical cells. The protein is Neuritin (NRN1) of Bos taurus (Bovine).